Here is a 218-residue protein sequence, read N- to C-terminus: Adenylate kinase (218 aa).

Gly-11–Thr-16 serves as a coordination point for ATP. The interval Ser-31–Val-60 is NMP. AMP contacts are provided by residues Thr-32, Arg-37, Asn-58–Val-60, Gly-86–Arg-89, and Gln-93. The interval Ala-127–Asp-165 is LID. ATP is bound at residue Arg-128. Residues Cys-131 and Cys-134 each coordinate Zn(2+). Thr-137–Tyr-138 serves as a coordination point for ATP. Zn(2+)-binding residues include Cys-151 and Cys-154. AMP contacts are provided by Arg-162 and Arg-173. Gln-201 is a binding site for ATP.

It belongs to the adenylate kinase family. In terms of assembly, monomer.

The protein localises to the cytoplasm. It catalyses the reaction AMP + ATP = 2 ADP. It participates in purine metabolism; AMP biosynthesis via salvage pathway; AMP from ADP: step 1/1. Catalyzes the reversible transfer of the terminal phosphate group between ATP and AMP. Plays an important role in cellular energy homeostasis and in adenine nucleotide metabolism. This chain is Adenylate kinase, found in Lactobacillus acidophilus (strain ATCC 700396 / NCK56 / N2 / NCFM).